A 245-amino-acid polypeptide reads, in one-letter code: Serine/arginine-rich splicing factor 1B (245 aa).

Residues 15–90 (CRIYVGNLPP…YRLRVEFPRS (76 aa)) enclose the RRM 1 domain. Disordered regions lie at residues 89-116 (RSGR…PPSR) and 192-245 (KVDG…RSRT). Positions 91–106 (GRGGGRGGGGGGGVGA) are enriched in gly residues. Residues 120–194 (YRVIVSGLPP…ETAYIRVKVD (75 aa)) form the RRM 2 domain. Positions 204–245 (SRSRSRSRSRSRSNSRSRSYSPRRSRGSPRYSPRHSRSRSRT) are enriched in basic residues.

Belongs to the splicing factor SR family.

Its subcellular location is the cytoplasm. It is found in the nucleus speckle. May play a role in preventing exon skipping, ensuring the accuracy of splicing and regulating alternative splicing. The protein is Serine/arginine-rich splicing factor 1B (srsf1b) of Danio rerio (Zebrafish).